The primary structure comprises 233 residues: Protein FAM204A (233 aa).

The interval 1-126 (MWSGLLPPGL…HSEPSSNETQ (126 aa)) is disordered. Residues 13–24 (SDAESNSEDEAT) are compositionally biased toward acidic residues. The span at 39 to 58 (ESIRKTEIIDFSTDEPKTET) shows a compositional bias: basic and acidic residues. The segment covering 97–109 (FRGKRRKRSRKDK) has biased composition (basic residues). Residues 144–164 (VKRKKVEKSGLEKRIDQAVEE) adopt a coiled-coil conformation.

This Homo sapiens (Human) protein is Protein FAM204A (FAM204A).